Reading from the N-terminus, the 133-residue chain is Brain natriuretic peptide (133 aa).

A signal peptide spans 1–22; sequence MVVSFVSICGLLLIFNLPLSTS. Residues 44–53 are compositionally biased toward acidic residues; it reads SMSEETEEDQ. Disordered regions lie at residues 44–76 and 93–112; these read SMSE…NRDQ and TRKN…FGRR. Cys108 and Cys124 are disulfide-bonded.

Belongs to the natriuretic peptide family.

Its subcellular location is the secreted. Functionally, cardiac hormone which may function as a paracrine antifibrotic factor in the heart. Also plays a key role in cardiovascular homeostasis through natriuresis, diuresis, vasorelaxation, and inhibition of renin and aldosterone secretion. Has a cGMP-stimulating activity. The chain is Brain natriuretic peptide (nppb) from Takifugu rubripes (Japanese pufferfish).